A 392-amino-acid chain; its full sequence is MAFLKLTEQNVQGKTVLIRADMNVPFKDGKISDDTRIRASLASIQYCMDNGASVIVMTHLGRPTEGEFHPEDDVAPVAAHLGGLLGKNVKVLNDWRENKPALNAGDVVMLQNVRINKGEKKNDLELGKAYASLCDVFVNDAFGTAHRAQASTEAVAQAAPVACAGVLMAGELDALGKALKQPARPMVAIVAGSKVSTKLTILESLADKVDQLIVGGGIANTFLLAEGKAIGKSLAEHDLVEESKKIMAKMAAKGGSVPLPTDVVVAKAFTADAEAVVKDIADVAEDDMILDIGPKSAAELADLLKAAGTVVWNGPVGVFEFDQFAGGTKALAEAIAQSKAFSIAGGGDTLAAIAKFGVTDQIGYISTGGGAFLEFLEGKELPAVAALEKRGA.

Substrate contacts are provided by residues 21-23 (DMN), Arg-36, 59-62 (HLGR), Arg-114, and Arg-147. Residues Lys-198, Glu-320, and 346–349 (GGDT) each bind ATP.

It belongs to the phosphoglycerate kinase family. As to quaternary structure, monomer.

The protein resides in the cytoplasm. It catalyses the reaction (2R)-3-phosphoglycerate + ATP = (2R)-3-phospho-glyceroyl phosphate + ADP. It participates in carbohydrate degradation; glycolysis; pyruvate from D-glyceraldehyde 3-phosphate: step 2/5. In Neisseria meningitidis serogroup C / serotype 2a (strain ATCC 700532 / DSM 15464 / FAM18), this protein is Phosphoglycerate kinase.